The chain runs to 88 residues: Large ribosomal subunit protein bL27 (88 aa).

A disordered region spans residues 1–25 (MAHKKGASSSSNGRDSEAKRLGVKR).

The protein belongs to the bacterial ribosomal protein bL27 family.

This Corynebacterium diphtheriae (strain ATCC 700971 / NCTC 13129 / Biotype gravis) protein is Large ribosomal subunit protein bL27.